An 834-amino-acid polypeptide reads, in one-letter code: DNA-directed RNA polymerase subunit beta' (834 aa).

Over residues 1–22 the composition is skewed to polar residues; the sequence is MTYSNKPTGSSLRSSRNSTLEP. The tract at residues 1 to 45 is disordered; the sequence is MTYSNKPTGSSLRSSRNSTLEPQSLVHREESKRQEGPKGQNLRIG. The span at 26-36 shows a compositional bias: basic and acidic residues; sequence VHREESKRQEG. 4 residues coordinate Zn(2+): C101, C103, C118, and C121. 3 residues coordinate Mg(2+): D606, D608, and D610.

The protein belongs to the RNA polymerase beta' chain family. RpoC1 subfamily. In plastids the minimal PEP RNA polymerase catalytic core is composed of four subunits: alpha, beta, beta', and beta''. When a (nuclear-encoded) sigma factor is associated with the core the holoenzyme is formed, which can initiate transcription. Requires Mg(2+) as cofactor. It depends on Zn(2+) as a cofactor.

The protein localises to the plastid. The protein resides in the chloroplast. The enzyme catalyses RNA(n) + a ribonucleoside 5'-triphosphate = RNA(n+1) + diphosphate. DNA-dependent RNA polymerase catalyzes the transcription of DNA into RNA using the four ribonucleoside triphosphates as substrates. The polypeptide is DNA-directed RNA polymerase subunit beta' (Staurastrum punctulatum (Green alga)).